Here is a 445-residue protein sequence, read N- to C-terminus: UNC93-like protein MFSD11 (445 aa).

A helical transmembrane segment spans residues 8–28 (LLNIVILGVGFMFMFTAFQTS). Asparagine 40 is a glycosylation site (N-linked (GlcNAc...) asparagine). 4 helical membrane passes run 52–72 (LAII…VIAV), 74–94 (GCQM…AMFI), 98–118 (TWSF…LWTA), and 138–158 (IFWA…YLAW). A glycan (N-linked (GlcNAc...) asparagine) is linked at asparagine 163. A run of 7 helical transmembrane segments spans residues 170-190 (RTVF…FFLI), 239-259 (MLLL…YSGV), 277-297 (LIGL…GLFG), 309-329 (PVVI…YLYM), 343-363 (LSAF…LLGL), 385-405 (APAF…AFFY), and 415-435 (LLIL…VEWG).

It belongs to the unc-93 family.

The protein localises to the membrane. The protein is UNC93-like protein MFSD11 (mfsd11) of Xenopus laevis (African clawed frog).